The sequence spans 153 residues: DNA gyrase inhibitor 1 (153 aa).

This sequence belongs to the DNA gyrase inhibitor family. In terms of assembly, interacts with DNA gyrase.

It localises to the cytoplasm. Functionally, inhibits the supercoiling activity of DNA gyrase. Acts by inhibiting DNA gyrase at an early step, prior to (or at the step of) binding of DNA by the gyrase. It protects cells against toxins that target DNA gyrase, by inhibiting activity of these toxins and reducing the formation of lethal double-strand breaks in the cell. In Dickeya dadantii (strain 3937) (Erwinia chrysanthemi (strain 3937)), this protein is DNA gyrase inhibitor 1.